A 576-amino-acid polypeptide reads, in one-letter code: Probable vesicular glutamate transporter eat-4 (576 aa).

Over 1-69 the chain is Cytoplasmic; it reads MSSWNEAWDR…QTWIGKCRKR (69 aa). The interval 25–46 is disordered; that stretch reads AAASATGAAPPQQMQEEGNENP. Residues 36–46 show a composition bias toward polar residues; that stretch reads QQMQEEGNENP. The helical transmembrane segment at 70 to 90 threads the bilayer; sequence WLLAILANMGFMISFGIRCNF. Residues 91 to 121 are Extracellular-facing; the sequence is GAAKTHMYKNYTDPYGKVHMHEFNWTIDELS. Asn100 and Asn114 each carry an N-linked (GlcNAc...) asparagine glycan. A helical transmembrane segment spans residues 122-142; the sequence is VMESSYFYGYLVTQIPAGFLA. Over 143–150 the chain is Cytoplasmic; it reads AKFPPNKL. The helical transmembrane segment at 151–171 threads the bilayer; the sequence is FGFGIGVGAFLNILLPYGFKV. Topologically, residues 172 to 174 are extracellular; sequence KSD. The helical transmembrane segment at 175–195 threads the bilayer; it reads YLVAFIQITQGLVQGVCYPAM. Residues 196-213 lie on the Cytoplasmic side of the membrane; the sequence is HGVWRYWAPPMERSKLAT. The chain crosses the membrane as a helical span at residues 214–234; sequence TAFTGSYAGAVLGLPLSAFLV. At 235 to 239 the chain is on the extracellular side; that stretch reads SYVSW. The chain crosses the membrane as a helical span at residues 240–260; sequence AAPFYLYGVCGVIWAILWFCV. Residues 261–305 are Cytoplasmic-facing; the sequence is TFEKPAFHPTISQEEKIFIEDAIGHVSNTHPTIRSIPWKAIVTSK. Residues 306–325 traverse the membrane as a helical segment; that stretch reads PVWAIIVANFARSWTFYLLL. The Extracellular segment spans residues 326–344; it reads QNQLTYMKEALGMKIADSG. Residues 345-365 traverse the membrane as a helical segment; sequence LLAAIPHLVMGCVVLMGGQLA. The Cytoplasmic segment spans residues 366–381; sequence DYLRSNKILSTTAVRK. A helical transmembrane segment spans residues 382-402; it reads IFNCGGFGGEAAFMLIVAYTT. Topologically, residues 403–406 are extracellular; the sequence is SDTT. The helical transmembrane segment at 407–427 threads the bilayer; sequence AIMALIAAVGMSGFAISGFNV. Residues 428 to 437 lie on the Cytoplasmic side of the membrane; it reads NHLDIAPRYA. The helical transmembrane segment at 438 to 458 threads the bilayer; it reads AILMGFSNGIGTLAGLTCPFV. Residues 459–471 are Extracellular-facing; it reads TEAFTAHSKHGWT. Residues 472-492 traverse the membrane as a helical segment; the sequence is SVFLLASLIHFTGVTFYAVYA. Topologically, residues 493-576 are cytoplasmic; the sequence is SGELQEWAEP…VVENPHYQQW (84 aa).

This sequence belongs to the major facilitator superfamily. Sodium/anion cotransporter family. VGLUT subfamily. In terms of tissue distribution, expressed in neurons of the pharynx and the extrapharyngeal nervous system. Highly expressed in male PHC sensory neurons.

The protein localises to the cell membrane. It is found in the synapse. In terms of biological role, required for glutamatergic synaptic transmission. In AWB and AWC sensory neurons, required for the detection of preferred food sources, probably via glutamatergic neurotransmission from sensory neurons. Negatively regulates the turning step of male mating behavior. In Caenorhabditis elegans, this protein is Probable vesicular glutamate transporter eat-4.